The sequence spans 138 residues: MRPTADSFRLKKGNVFPNFDPCAQALQKSCHFALSFLIGKMGIIILSVCLICTRLLQEGIAQSKCLINVSFSLYSCFIVFVTISQDSETLSLDCDHRLFFSLPFTDPASGGQSQHSWPCPERSKNLPQVSKQLRNRAG.

2 helical membrane-spanning segments follow: residues 32 to 52 and 65 to 85; these read FALS…CLIC and CLIN…TISQ. The segment at 109–138 is disordered; the sequence is SGGQSQHSWPCPERSKNLPQVSKQLRNRAG.

It is found in the membrane. The polypeptide is Putative protein encoded by LINC02912 (Homo sapiens (Human)).